Consider the following 162-residue polypeptide: uncharacterized protein (162 aa).

The next 4 membrane-spanning stretches (helical) occupy residues 10 to 30, 50 to 70, 96 to 116, and 125 to 145; these read ILSF…MLIL, IVEL…ALYN, IAQY…IILL, and FTAI…LFIF.

The protein localises to the cell membrane. This is an uncharacterized protein from Methanocaldococcus jannaschii (strain ATCC 43067 / DSM 2661 / JAL-1 / JCM 10045 / NBRC 100440) (Methanococcus jannaschii).